The primary structure comprises 33 residues: Pardaxin P-3 (33 aa).

This sequence belongs to the pardaxin family. In aqueous solution exists as a tetramer.

Its subcellular location is the secreted. The protein localises to the target cell membrane. Its function is as follows. Exhibits unusual shark repellent and surfactant properties. Forms voltage-dependent, ion-permeable channels in membranes. At high concentration causes cell membrane lysis. This Pardachirus pavoninus (Peacock sole) protein is Pardaxin P-3.